Consider the following 714-residue polypeptide: Cyclomaltodextrin glucanotransferase (714 aa).

Residues 1–27 (MKSRYKRLTSLALSLSMALGISLPAWA) form the signal peptide. The A1 stretch occupies residues 28–165 (SPDTSVDNKV…NIKVVIDFAP (138 aa)). D54, N59, N60, G78, and D80 together coordinate Ca(2+). 127–128 (YW) contacts substrate. A Ca(2+)-binding site is contributed by N166. Residues 166–229 (NHTSPADRDN…NLYDLADINH (64 aa)) are b. Position 167 (H167) interacts with substrate. I217 serves as a coordination point for Ca(2+). 220-223 (NLYD) is a binding site for substrate. D226 is a binding site for Ca(2+). Residues 230-434 (NNNAMDAYFK…LRKSNPAIAY (205 aa)) form an A2 region. R254 contacts substrate. The active-site Nucleophile is D256. 259 to 260 (KH) contributes to the substrate binding site. H260 is a binding site for Ca(2+). Catalysis depends on E285, which acts as the Proton donor. Substrate contacts are provided by H355, D399, and R403. Residues 435 to 523 (GTTTERWVNN…GTAVWQYTAP (89 aa)) form a c region. The tract at residues 524-610 (ETSPAIGNVG…SNTFKSFNVL (87 aa)) is d. Residues 527 to 607 (PAIGNVGPTM…GTASNTFKSF (81 aa)) enclose the IPT/TIG domain. The CBM20 domain maps to 609–714 (VLTGDQVTVR…VGTVTVDWQN (106 aa)). Positions 611-714 (TGDQVTVRFL…VGTVTVDWQN (104 aa)) are e.

Belongs to the glycosyl hydrolase 13 family. In terms of assembly, monomer. The cofactor is Ca(2+).

It is found in the secreted. It catalyses the reaction Cyclizes part of a (1-&gt;4)-alpha-D-glucan chain by formation of a (1-&gt;4)-alpha-D-glucosidic bond.. This Paenibacillus macerans (Bacillus macerans) protein is Cyclomaltodextrin glucanotransferase (cgtM).